A 384-amino-acid chain; its full sequence is Substance-K receptor (384 aa).

Residues Met1–Gln32 are Extracellular-facing. The N-linked (GlcNAc...) asparagine glycan is linked to Asn19. The chain crosses the membrane as a helical span at residues Leu33 to Trp56. Over Ile57–Asn69 the chain is Cytoplasmic. Residues Tyr70 to Asn90 traverse the membrane as a helical segment. Residues Phe91–Tyr107 lie on the Extracellular side of the membrane. Cys106 and Cys181 are oxidised to a cystine. A helical membrane pass occupies residues Phe108 to Ala129. Topologically, residues Asp130–Lys149 are cytoplasmic. Residues Ala150–Ser170 form a helical membrane-spanning segment. Residues Thr171–Leu196 are Extracellular-facing. The chain crosses the membrane as a helical span at residues Tyr197–Ser218. The Cytoplasmic portion of the chain corresponds to Val219–Ala251. The chain crosses the membrane as a helical span at residues Met252–Leu272. Topologically, residues Gly273–Leu290 are extracellular. The chain crosses the membrane as a helical span at residues Ala291–Leu310. The Cytoplasmic segment spans residues Asn311 to Pro384. The S-palmitoyl cysteine moiety is linked to residue Cys324.

This sequence belongs to the G-protein coupled receptor 1 family.

It is found in the cell membrane. This is a receptor for the tachykinin neuropeptide substance K (neurokinin A). It is associated with G proteins that activate a phosphatidylinositol-calcium second messenger system. The rank order of affinity of this receptor to tachykinins is: substance K &gt; neuromedin-K &gt; substance P. This Mesocricetus auratus (Golden hamster) protein is Substance-K receptor (TACR2).